The sequence spans 134 residues: Small ribosomal subunit protein uS8c (134 aa).

This sequence belongs to the universal ribosomal protein uS8 family. Part of the 30S ribosomal subunit.

The protein localises to the plastid. The protein resides in the chloroplast. One of the primary rRNA binding proteins, it binds directly to 16S rRNA central domain where it helps coordinate assembly of the platform of the 30S subunit. This chain is Small ribosomal subunit protein uS8c (rps8), found in Draba nemorosa (Woodland whitlowgrass).